A 243-amino-acid chain; its full sequence is tRNA (guanine-N(1)-)-methyltransferase (243 aa).

S-adenosyl-L-methionine-binding positions include Gly108 and 127 to 132 (LGDFVL).

The protein belongs to the RNA methyltransferase TrmD family. In terms of assembly, homodimer.

The protein localises to the cytoplasm. The catalysed reaction is guanosine(37) in tRNA + S-adenosyl-L-methionine = N(1)-methylguanosine(37) in tRNA + S-adenosyl-L-homocysteine + H(+). In terms of biological role, specifically methylates guanosine-37 in various tRNAs. This chain is tRNA (guanine-N(1)-)-methyltransferase, found in Streptococcus equi subsp. zooepidemicus (strain MGCS10565).